The sequence spans 122 residues: Large ribosomal subunit protein uL14 (122 aa).

The protein belongs to the universal ribosomal protein uL14 family. In terms of assembly, part of the 50S ribosomal subunit. Forms a cluster with proteins L3 and L19. In the 70S ribosome, L14 and L19 interact and together make contacts with the 16S rRNA in bridges B5 and B8.

Functionally, binds to 23S rRNA. Forms part of two intersubunit bridges in the 70S ribosome. The chain is Large ribosomal subunit protein uL14 from Geobacillus thermodenitrificans (strain NG80-2).